The chain runs to 512 residues: tRNA modification GTPase gtpbp3, mitochondrial (512 aa).

The 189-residue stretch at 246–434 (GANIAIVGPP…LLNLLKLNLK (189 aa)) folds into the TrmE-type G domain. Residues 253–260 (GPPNAGKS), 300–304 (DTAGL), and 375–378 (NKSD) contribute to the GTP site.

This sequence belongs to the TRAFAC class TrmE-Era-EngA-EngB-Septin-like GTPase superfamily. TrmE GTPase family.

It localises to the mitochondrion. GTPase involved in the 5-carboxymethylaminomethyl modification (mnm(5)s(2)U34) of the wobble uridine base in mitochondrial tRNAs. The protein is tRNA modification GTPase gtpbp3, mitochondrial (gtpbp3) of Dictyostelium discoideum (Social amoeba).